A 469-amino-acid chain; its full sequence is Glutamate--tRNA ligase (469 aa).

The short motif at P10 to G20 is the 'HIGH' region element. Zn(2+)-binding residues include C99, C101, C126, and D128. The 'KMSKS' region motif lies at R238–R242. K241 lines the ATP pocket.

This sequence belongs to the class-I aminoacyl-tRNA synthetase family. Glutamate--tRNA ligase type 1 subfamily. Monomer. The cofactor is Zn(2+).

Its subcellular location is the cytoplasm. It carries out the reaction tRNA(Glu) + L-glutamate + ATP = L-glutamyl-tRNA(Glu) + AMP + diphosphate. In terms of biological role, catalyzes the attachment of glutamate to tRNA(Glu) in a two-step reaction: glutamate is first activated by ATP to form Glu-AMP and then transferred to the acceptor end of tRNA(Glu). This is Glutamate--tRNA ligase from Pelobacter propionicus (strain DSM 2379 / NBRC 103807 / OttBd1).